Reading from the N-terminus, the 248-residue chain is UPF0246 protein A1G_03985 (248 aa).

It belongs to the UPF0246 family.

In Rickettsia rickettsii (strain Sheila Smith), this protein is UPF0246 protein A1G_03985.